We begin with the raw amino-acid sequence, 85 residues long: Transcription factor 4 (85 aa).

The 54-residue stretch at 7–60 folds into the bHLH domain; that stretch reads ERRMANNARERLRVRDINEAFKELGRMVQLHLKSDKPQTKLLILHQAVAVILSL. The tract at residues 62-85 is class A specific domain; that stretch reads QQVRERNLNPKAACLKRREEEKVS.

As to quaternary structure, efficient DNA binding requires dimerization with another bHLH protein. Forms homo- or heterooligomers with myogenin.

The protein resides in the nucleus. Functionally, transcription factor that binds to the immunoglobulin enhancer Mu-E5/KE5-motif. Involved in the initiation of neuronal differentiation. Binds to the E-box present in the somatostatin receptor 2 initiator element (SSTR2-INR) to activate transcription. In Gallus gallus (Chicken), this protein is Transcription factor 4 (TCF4).